A 288-amino-acid chain; its full sequence is ATP synthase subunit a (288 aa).

The next 6 membrane-spanning stretches (helical) occupy residues 47–67 (LDSMLWSIGLGIVFCAIFWMV), 104–124 (LIAPLALTIFVWIFLMNLMDL), 157–177 (DPNITLGMSFSVFILILFYSI), 199–219 (PIVQIILIPINFILEFVTLIA), 237–257 (LIFILIALMPFWIQWALSVPW), and 258–278 (AIFHILIITLQAFVFMMLTIV).

The protein belongs to the ATPase A chain family. F-type ATPases have 2 components, CF(1) - the catalytic core - and CF(0) - the membrane proton channel. CF(1) has five subunits: alpha(3), beta(3), gamma(1), delta(1), epsilon(1). CF(0) has three main subunits: a(1), b(2) and c(9-12). The alpha and beta chains form an alternating ring which encloses part of the gamma chain. CF(1) is attached to CF(0) by a central stalk formed by the gamma and epsilon chains, while a peripheral stalk is formed by the delta and b chains.

The protein localises to the cell inner membrane. Its function is as follows. Key component of the proton channel; it plays a direct role in the translocation of protons across the membrane. This chain is ATP synthase subunit a, found in Psychrobacter cryohalolentis (strain ATCC BAA-1226 / DSM 17306 / VKM B-2378 / K5).